We begin with the raw amino-acid sequence, 316 residues long: UPF0725 protein At1g02770 (316 aa).

Belongs to the UPF0725 (EMB2204) family.

This is UPF0725 protein At1g02770 from Arabidopsis thaliana (Mouse-ear cress).